A 251-amino-acid chain; its full sequence is Octanoyltransferase (251 aa).

Residues 56-237 (ADTGDEIWVV…RLIANLDGES (182 aa)) form the BPL/LPL catalytic domain. Substrate-binding positions include 96 to 103 (RGGQITYH), 168 to 170 (ALG), and 181 to 183 (GLS). Cys199 serves as the catalytic Acyl-thioester intermediate.

Belongs to the LipB family.

Its subcellular location is the cytoplasm. The catalysed reaction is octanoyl-[ACP] + L-lysyl-[protein] = N(6)-octanoyl-L-lysyl-[protein] + holo-[ACP] + H(+). Its pathway is protein modification; protein lipoylation via endogenous pathway; protein N(6)-(lipoyl)lysine from octanoyl-[acyl-carrier-protein]: step 1/2. Catalyzes the transfer of endogenously produced octanoic acid from octanoyl-acyl-carrier-protein onto the lipoyl domains of lipoate-dependent enzymes. Lipoyl-ACP can also act as a substrate although octanoyl-ACP is likely to be the physiological substrate. In Burkholderia ambifaria (strain MC40-6), this protein is Octanoyltransferase.